The following is a 129-amino-acid chain: Glycine cleavage system H protein (129 aa).

A Lipoyl-binding domain is found at 24–106 (VFTVGISEHA…YGDGWLFKIK (83 aa)). Lys-65 carries the post-translational modification N6-lipoyllysine.

This sequence belongs to the GcvH family. In terms of assembly, the glycine cleavage system is composed of four proteins: P, T, L and H. (R)-lipoate is required as a cofactor.

Functionally, the glycine cleavage system catalyzes the degradation of glycine. The H protein shuttles the methylamine group of glycine from the P protein to the T protein. The polypeptide is Glycine cleavage system H protein (Alteromonas mediterranea (strain DSM 17117 / CIP 110805 / LMG 28347 / Deep ecotype)).